Here is a 177-residue protein sequence, read N- to C-terminus: Ribosome maturation factor RimM (177 aa).

Residues 98–177 (DDGYYWKDLM…TIEVDWDPGF (80 aa)) form the PRC barrel domain.

It belongs to the RimM family. As to quaternary structure, binds ribosomal protein uS19.

It is found in the cytoplasm. Functionally, an accessory protein needed during the final step in the assembly of 30S ribosomal subunit, possibly for assembly of the head region. Essential for efficient processing of 16S rRNA. May be needed both before and after RbfA during the maturation of 16S rRNA. It has affinity for free ribosomal 30S subunits but not for 70S ribosomes. The sequence is that of Ribosome maturation factor RimM from Enterobacter sp. (strain 638).